The sequence spans 271 residues: Putative pyruvate, phosphate dikinase regulatory protein 2 (271 aa).

Residue 151–158 (GVSRTSKT) participates in ADP binding.

Belongs to the pyruvate, phosphate/water dikinase regulatory protein family. PDRP subfamily.

The enzyme catalyses N(tele)-phospho-L-histidyl/L-threonyl-[pyruvate, phosphate dikinase] + ADP = N(tele)-phospho-L-histidyl/O-phospho-L-threonyl-[pyruvate, phosphate dikinase] + AMP + H(+). It carries out the reaction N(tele)-phospho-L-histidyl/O-phospho-L-threonyl-[pyruvate, phosphate dikinase] + phosphate + H(+) = N(tele)-phospho-L-histidyl/L-threonyl-[pyruvate, phosphate dikinase] + diphosphate. Bifunctional serine/threonine kinase and phosphorylase involved in the regulation of the pyruvate, phosphate dikinase (PPDK) by catalyzing its phosphorylation/dephosphorylation. The protein is Putative pyruvate, phosphate dikinase regulatory protein 2 of Staphylococcus haemolyticus (strain JCSC1435).